A 236-amino-acid chain; its full sequence is tRNA (guanine-N(7)-)-methyltransferase (236 aa).

Residues Glu43, Asp68, Asn102, and Asn125 each coordinate S-adenosyl-L-methionine. Substrate contacts are provided by Lys129 and Asp161.

Belongs to the class I-like SAM-binding methyltransferase superfamily. TrmB family.

It carries out the reaction guanosine(46) in tRNA + S-adenosyl-L-methionine = N(7)-methylguanosine(46) in tRNA + S-adenosyl-L-homocysteine. It functions in the pathway tRNA modification; N(7)-methylguanine-tRNA biosynthesis. Catalyzes the formation of N(7)-methylguanine at position 46 (m7G46) in tRNA. This chain is tRNA (guanine-N(7)-)-methyltransferase, found in Ruminiclostridium cellulolyticum (strain ATCC 35319 / DSM 5812 / JCM 6584 / H10) (Clostridium cellulolyticum).